Here is a 76-residue protein sequence, read N- to C-terminus: uncharacterized protein (76 aa).

Helical transmembrane passes span 9–29 (AIGI…LQAV) and 45–65 (LLMI…FLDY).

The protein localises to the cell membrane. This is an uncharacterized protein from Bacillus subtilis (strain 168).